A 700-amino-acid chain; its full sequence is Glycine--tRNA ligase beta subunit (700 aa).

The protein belongs to the class-II aminoacyl-tRNA synthetase family. Tetramer of two alpha and two beta subunits.

It is found in the cytoplasm. It carries out the reaction tRNA(Gly) + glycine + ATP = glycyl-tRNA(Gly) + AMP + diphosphate. This Helicobacter pylori (strain Shi470) protein is Glycine--tRNA ligase beta subunit.